The primary structure comprises 795 residues: Phenylalanine--tRNA ligase beta subunit (795 aa).

Residues 39–148 (AGSFHGVVVG…ADAPIGTDIR (110 aa)) form the tRNA-binding domain. The B5 domain maps to 401 to 476 (PKRATITLRR…RVYGYNNIPD (76 aa)). 4 residues coordinate Mg(2+): aspartate 454, aspartate 460, glutamate 463, and glutamate 464. Residues 701-794 (SRFPANRRDI…LKERFQASLR (94 aa)) form the FDX-ACB domain.

Belongs to the phenylalanyl-tRNA synthetase beta subunit family. Type 1 subfamily. In terms of assembly, tetramer of two alpha and two beta subunits. Mg(2+) is required as a cofactor.

It localises to the cytoplasm. The catalysed reaction is tRNA(Phe) + L-phenylalanine + ATP = L-phenylalanyl-tRNA(Phe) + AMP + diphosphate + H(+). The sequence is that of Phenylalanine--tRNA ligase beta subunit from Shigella dysenteriae serotype 1 (strain Sd197).